We begin with the raw amino-acid sequence, 302 residues long: Protoheme IX farnesyltransferase 1 (302 aa).

9 consecutive transmembrane segments (helical) span residues 30–50, 52–72, 102–122, 124–144, 152–172, 178–198, 224–244, 245–265, and 282–302; these read VVAL…PGAV, LQPL…AAAF, ALTF…TLVN, LTAW…TAYL, IVVG…SVTG, ALLL…ALAI, CILL…LVGM, CGPL…YKSW, and FSIY…YLWV.

Belongs to the UbiA prenyltransferase family. Protoheme IX farnesyltransferase subfamily.

The protein resides in the cell inner membrane. It carries out the reaction heme b + (2E,6E)-farnesyl diphosphate + H2O = Fe(II)-heme o + diphosphate. It participates in porphyrin-containing compound metabolism; heme O biosynthesis; heme O from protoheme: step 1/1. Functionally, converts heme B (protoheme IX) to heme O by substitution of the vinyl group on carbon 2 of heme B porphyrin ring with a hydroxyethyl farnesyl side group. The sequence is that of Protoheme IX farnesyltransferase 1 from Shewanella woodyi (strain ATCC 51908 / MS32).